The chain runs to 64 residues: Large ribosomal subunit protein uL29 (64 aa).

This sequence belongs to the universal ribosomal protein uL29 family.

This is Large ribosomal subunit protein uL29 from Burkholderia mallei (strain NCTC 10247).